A 229-amino-acid chain; its full sequence is Lipoprotein-releasing system ATP-binding protein LolD (229 aa).

Residues 6-229 (LELDAIERTY…DGHLTPYVPA (224 aa)) enclose the ABC transporter domain. 42 to 49 (GPSGSGKS) contacts ATP.

This sequence belongs to the ABC transporter superfamily. Lipoprotein translocase (TC 3.A.1.125) family. In terms of assembly, the complex is composed of two ATP-binding proteins (LolD) and two transmembrane proteins (LolC and LolE).

The protein localises to the cell inner membrane. In terms of biological role, part of the ABC transporter complex LolCDE involved in the translocation of mature outer membrane-directed lipoproteins, from the inner membrane to the periplasmic chaperone, LolA. Responsible for the formation of the LolA-lipoprotein complex in an ATP-dependent manner. This chain is Lipoprotein-releasing system ATP-binding protein LolD, found in Maricaulis maris (strain MCS10) (Caulobacter maris).